Consider the following 221-residue polypeptide: 2-amino-5-formylamino-6-ribosylaminopyrimidin-4(3H)-one 5'-monophosphate deformylase (221 aa).

Residues Glu29, His31, Asp40, and His108 each coordinate Fe cation.

This sequence belongs to the creatininase superfamily. FAPy deformylase family. As to quaternary structure, homodimer. Requires Fe(2+) as cofactor. It depends on Zn(2+) as a cofactor.

It catalyses the reaction 2-amino-5-formylamino-6-(5-phospho-D-ribosylamino)pyrimidin-4(3H)-one + H2O = 2,5-diamino-6-(1-D-ribosylamino)pyrimidin-4(3H)-one 5'-phosphate + formate + H(+). It functions in the pathway cofactor biosynthesis; coenzyme F420 biosynthesis. It participates in cofactor biosynthesis; riboflavin biosynthesis. Functionally, catalyzes the hydrolysis of the formamide of 2-amino-5-formylamino-6-ribosylamino-4(3H)-pyrimidinone 5'-monophosphate (FAPy) to form 2,5-diamino-6-ribosylamino-4(3H)-pyrimidinone 5'-phosphate (APy). The protein is 2-amino-5-formylamino-6-ribosylaminopyrimidin-4(3H)-one 5'-monophosphate deformylase of Methanococcus maripaludis (strain C5 / ATCC BAA-1333).